The sequence spans 70 residues: Exodeoxyribonuclease 7 small subunit (70 aa).

The protein belongs to the XseB family. Heterooligomer composed of large and small subunits.

It localises to the cytoplasm. The enzyme catalyses Exonucleolytic cleavage in either 5'- to 3'- or 3'- to 5'-direction to yield nucleoside 5'-phosphates.. Its function is as follows. Bidirectionally degrades single-stranded DNA into large acid-insoluble oligonucleotides, which are then degraded further into small acid-soluble oligonucleotides. The protein is Exodeoxyribonuclease 7 small subunit of Magnetococcus marinus (strain ATCC BAA-1437 / JCM 17883 / MC-1).